Reading from the N-terminus, the 365-residue chain is MQTLKVDLGERSYPIYIGEGLLDQPELLAPHIAGRQVAIVSNETVAPLYLERLSKALGAYSVLPVVLPDGEAHKNWETLQLIFDGLLTARHDRRTTVVALGGGVIGDMAGFAAACYQRGVDFIQVPTTLLSQVDSSVGGKTGINHPLGKNMVGAFYQPKAVLIDTTSLKTLPARELSAGLAEVIKYGLICDKPFLAWLEDNMQALRALDSAALTEAIRRSCAAKAAVVGADERESGLRATLNLGHTFGHAIETHMGYGVWLHGEAVAAGTVMALEMSMRLGWIDQAERDRGIRLLQDAGLPVVPPQEMTPAHFMEHMAVDKKVLDGRLRLVLLRQMGEAVVTDDYSKEILQATLSADYRAIVAQL.

NAD(+) is bound by residues 69–74 (DGEAHK), 103–107 (GVIGD), 127–128 (TT), Lys-140, and Lys-149. The Zn(2+) site is built by Glu-182, His-245, and His-262.

This sequence belongs to the sugar phosphate cyclases superfamily. Dehydroquinate synthase family. NAD(+) serves as cofactor. The cofactor is Co(2+). Requires Zn(2+) as cofactor.

Its subcellular location is the cytoplasm. It catalyses the reaction 7-phospho-2-dehydro-3-deoxy-D-arabino-heptonate = 3-dehydroquinate + phosphate. The protein operates within metabolic intermediate biosynthesis; chorismate biosynthesis; chorismate from D-erythrose 4-phosphate and phosphoenolpyruvate: step 2/7. Catalyzes the conversion of 3-deoxy-D-arabino-heptulosonate 7-phosphate (DAHP) to dehydroquinate (DHQ). The protein is 3-dehydroquinate synthase of Pseudomonas putida (strain ATCC 47054 / DSM 6125 / CFBP 8728 / NCIMB 11950 / KT2440).